The chain runs to 433 residues: Mitochondrial distribution and morphology protein 12 (433 aa).

An SMP-LTD domain is found at 1-433; sequence MSIDIDWERA…VYPSFWTFLI (433 aa). 3 disordered regions span residues 62-113, 180-279, and 356-376; these read LSDP…GGQM, TPLG…RMRE, and GPET…SPRR. Positions 81–96 are enriched in basic and acidic residues; the sequence is SEERSPTREPVDRYGN. Residues 214–236 are compositionally biased toward polar residues; it reads SAQSRPSTANTGNTLPSRDSMSV. The span at 268–279 shows a compositional bias: basic and acidic residues; that stretch reads PLDDTPPRRMRE.

It belongs to the MDM12 family. Component of the ER-mitochondria encounter structure (ERMES) or MDM complex, composed of MMM1, MDM10, MDM12 and MDM34. An MMM1 homodimer associates with one molecule of MDM12 on each side in a pairwise head-to-tail manner, and the SMP-LTD domains of MMM1 and MDM12 generate a continuous hydrophobic tunnel for phospholipid trafficking.

It is found in the mitochondrion outer membrane. The protein localises to the endoplasmic reticulum membrane. Its function is as follows. Component of the ERMES/MDM complex, which serves as a molecular tether to connect the endoplasmic reticulum (ER) and mitochondria. Components of this complex are involved in the control of mitochondrial shape and protein biogenesis, and function in nonvesicular lipid trafficking between the ER and mitochondria. MDM12 is required for the interaction of the ER-resident membrane protein MMM1 and the outer mitochondrial membrane-resident beta-barrel protein MDM10. The MDM12-MMM1 subcomplex functions in the major beta-barrel assembly pathway that is responsible for biogenesis of all mitochondrial outer membrane beta-barrel proteins, and acts in a late step after the SAM complex. The MDM10-MDM12-MMM1 subcomplex further acts in the TOM40-specific pathway after the action of the MDM12-MMM1 complex. Essential for establishing and maintaining the structure of mitochondria and maintenance of mtDNA nucleoids. The sequence is that of Mitochondrial distribution and morphology protein 12 from Ajellomyces capsulatus (strain NAm1 / WU24) (Darling's disease fungus).